Here is a 91-residue protein sequence, read N- to C-terminus: MDIKLINIGFGNIVSARRIVAIVSPESAPIKRIIQEARDRGMLIDATYGRRTRAVIITDSDHIILSAVQPETVAHRLSSREPLASAEEPVD.

The protein belongs to the RemA family.

The chain is Putative regulatory protein Moth_0891 from Moorella thermoacetica (strain ATCC 39073 / JCM 9320).